We begin with the raw amino-acid sequence, 99 residues long: Aspartyl/glutamyl-tRNA(Asn/Gln) amidotransferase subunit C (99 aa).

Belongs to the GatC family. In terms of assembly, heterotrimer of A, B and C subunits.

It catalyses the reaction L-glutamyl-tRNA(Gln) + L-glutamine + ATP + H2O = L-glutaminyl-tRNA(Gln) + L-glutamate + ADP + phosphate + H(+). The enzyme catalyses L-aspartyl-tRNA(Asn) + L-glutamine + ATP + H2O = L-asparaginyl-tRNA(Asn) + L-glutamate + ADP + phosphate + 2 H(+). Its function is as follows. Allows the formation of correctly charged Asn-tRNA(Asn) or Gln-tRNA(Gln) through the transamidation of misacylated Asp-tRNA(Asn) or Glu-tRNA(Gln) in organisms which lack either or both of asparaginyl-tRNA or glutaminyl-tRNA synthetases. The reaction takes place in the presence of glutamine and ATP through an activated phospho-Asp-tRNA(Asn) or phospho-Glu-tRNA(Gln). The chain is Aspartyl/glutamyl-tRNA(Asn/Gln) amidotransferase subunit C from Variovorax paradoxus (strain S110).